We begin with the raw amino-acid sequence, 83 residues long: Bublin coiled-coil protein (83 aa).

Residues 1–25 (MSGPNGDLGMPVDAGTEGENDSFGE) are disordered. The stretch at 25-74 (EAEYAAINSMLDQINSCLDHLEEKNDHLHARLQELLESNRQTRLEFQQQL) forms a coiled coil. S82 carries the phosphoserine modification.

The protein belongs to the UPF0184 (EST00098) family.

The protein resides in the cell junction. It localises to the cytoplasm. It is found in the cytoskeleton. Functionally, essential for intermediate filament organization in intestinal cells, interacts with intermediate filament and regulates intestinal lumen morphology. The sequence is that of Bublin coiled-coil protein from Mus musculus (Mouse).